Consider the following 99-residue polypeptide: Integration host factor subunit alpha (99 aa).

It belongs to the bacterial histone-like protein family. As to quaternary structure, heterodimer of an alpha and a beta chain.

This protein is one of the two subunits of integration host factor, a specific DNA-binding protein that functions in genetic recombination as well as in transcriptional and translational control. The polypeptide is Integration host factor subunit alpha (Enterobacter sp. (strain 638)).